We begin with the raw amino-acid sequence, 623 residues long: Keratin, type I cytoskeletal 9 (623 aa).

Positions 1–13 (MSCRQFSSSYLSR) are enriched in low complexity. The disordered stretch occupies residues 1-25 (MSCRQFSSSYLSRSGGGGGGGLGSG). Residues 1-152 (MSCRQFSSSY…GGDGGILTAN (152 aa)) are head. Phosphoserine occurs at positions 14 and 57. Positions 14–25 (SGGGGGGGLGSG) are enriched in gly residues. Residues 153-188 (EKSTMQELNSRLASYLDKVQALEEANNDLENKIQDW) form a coil 1A region. Positions 153-465 (EKSTMQELNS…NLLEGGQEDF (313 aa)) constitute an IF rod domain. Residues 189–207 (YDKKGPAAIQKNYSPYYNT) form a linker 1 region. The segment at 208–299 (IDDLKDQIVD…KNHKEEMSQL (92 aa)) is coil 1B. The tract at residues 300-322 (TGQNSGDVNVEINVAPGKDLTKT) is linker 12. Positions 323–461 (LNDMRQEYEQ…ETYHNLLEGG (139 aa)) are coil 2. Disordered regions lie at residues 462–496 (QEDFESSGAGKIGLGGRGGSGGSYGRGSRGGSGGS) and 534–623 (YGGG…SSHS). Residues 462-623 (QEDFESSGAG…GGGSGKSSHS (162 aa)) form a tail region. The segment covering 471-496 (GKIGLGGRGGSGGSYGRGSRGGSGGS) has biased composition (gly residues).

The protein belongs to the intermediate filament family. As to quaternary structure, heterotetramer of two type I and two type II keratins. In terms of tissue distribution, expressed in the terminally differentiated epidermis of palms and soles.

In terms of biological role, may serve an important special function either in the mature palmar and plantar skin tissue or in the morphogenetic program of the formation of these tissues. Plays a role in keratin filament assembly. This chain is Keratin, type I cytoskeletal 9 (KRT9), found in Homo sapiens (Human).